Here is a 518-residue protein sequence, read N- to C-terminus: Glutamate--cysteine ligase (518 aa).

It belongs to the glutamate--cysteine ligase type 1 family. Type 1 subfamily.

The catalysed reaction is L-cysteine + L-glutamate + ATP = gamma-L-glutamyl-L-cysteine + ADP + phosphate + H(+). Its pathway is sulfur metabolism; glutathione biosynthesis; glutathione from L-cysteine and L-glutamate: step 1/2. The chain is Glutamate--cysteine ligase (gshA) from Buchnera aphidicola subsp. Acyrthosiphon pisum (strain APS) (Acyrthosiphon pisum symbiotic bacterium).